The primary structure comprises 183 residues: Secreted RxLR effector protein 41 (183 aa).

The N-terminal stretch at 1-18 (MLGFVTGVLAISAHVIVS) is a signal peptide. A RxLR-dEER motif is present at residues 41-65 (RRLRSYETDTASARAEEGTSDIEER). A glycan (N-linked (GlcNAc...) asparagine) is linked at asparagine 88.

It belongs to the RxLR effector family.

It localises to the secreted. It is found in the host nucleus. The protein localises to the host cytoplasm. Functionally, secreted effector that dos not suppress the host cell death induced by cell death-inducing proteins. This chain is Secreted RxLR effector protein 41, found in Plasmopara viticola (Downy mildew of grapevine).